Reading from the N-terminus, the 359-residue chain is MGNTLTCCVSPNASPKLGRRAGSAELYCASDIYEAVSGDAVAVAPAVVEPAELDFGEGEGHHLQHISDREMPEDLALESNPSDHPRASTIFLSKSQTDVREKRKSNHLNHVSPGQLTKKYSSCSTIFLDDSTVSQPNLRTTVKCVTLAIYYHIKNRDANRSLDIFDERSHPLTREKVPEEYFKHDPEHKFIYRFVRTLFSAAQLTAECAIVTLVYLERLLTYAEIDICPTNWKRIVLGAILLASKVWDDQAVWNVDYCQILKDITVEDMNEMERHFLELLQFNINVPASVYAKYYFDLRSLADDNNLNFLFAPLSKERAQNLEAISRLCEDKDLCRAAMRRSFSADNFIGIQRSKAILS.

Phosphoserine occurs at positions 67, 105, and 112. The Cyclin N-terminal domain maps to 145-267; sequence VTLAIYYHIK…CQILKDITVE (123 aa). Residue serine 344 is modified to Phosphoserine.

Belongs to the cyclin family. Cyclin Y subfamily. As to quaternary structure, interacts with CDK16; this interaction mutually increases the stability of CDK16 and CCNYL1 and increases the kinase activity of CDK16.

The protein resides in the cell membrane. Functionally, key regulator of Wnt signaling implicated in various biological processes including male fertility, embryonic neurogenesis and cortex development. Activates the cyclin-dependent kinase CDK16, and promotes sperm maturation. The sequence is that of Cyclin-Y-like protein 1 from Homo sapiens (Human).